Reading from the N-terminus, the 520-residue chain is GMP synthase [glutamine-hydrolyzing] (520 aa).

The 194-residue stretch at 9 to 202 (KILILDFGSQ…VRAICGCTGH (194 aa)) folds into the Glutamine amidotransferase type-1 domain. Catalysis depends on cysteine 86, which acts as the Nucleophile. Active-site residues include histidine 176 and glutamate 178. A GMPS ATP-PPase domain is found at 203 to 395 (WTPGQIIEDA…LGLPHQMVWR (193 aa)). 230-236 (SGGVDSS) lines the ATP pocket.

In terms of assembly, homodimer.

It catalyses the reaction XMP + L-glutamine + ATP + H2O = GMP + L-glutamate + AMP + diphosphate + 2 H(+). It participates in purine metabolism; GMP biosynthesis; GMP from XMP (L-Gln route): step 1/1. Its function is as follows. Catalyzes the synthesis of GMP from XMP. This Pelobacter propionicus (strain DSM 2379 / NBRC 103807 / OttBd1) protein is GMP synthase [glutamine-hydrolyzing].